An 896-amino-acid polypeptide reads, in one-letter code: MQTHEIRKRFLDHFVKAGHTEVPSASVILDDPNLLFVNAGMVQFVPYFLGQRTPPWNRATSIQKCIRTPDIDEVGITTRHNTFFQMAGNFSFGDYFKRGAIELAWTLLTNPVEEGGYGFDPERLWATVYLDDDEAIGLWQEVAGLPAERIQRRGMADNYWSMGIPGPCGPSSEIYYDRGPEYGVEGGPEANEDRYIEIWNLVFMQNERGEGTSKEDFEILGPLPRKNIDTGMGIERVACLLQGVDNVYETDLLRPVIDKVAAVAPRGYGAGNHDDDVRYRIIADHTRTAAIIIADGVSPGNEGRGYVLRRLLRRIIRAAKLLGVEQPVMGDLIATVRDAMGPSYPELVTDFERINRIAVAEETAFNRTLASGSKLFEDAARATKKSGATVLSGSDAFTLHDTYGFPIDLTLEMAAEAGLSVDQEGFRTLMAEQRQRAKADAAARKQAHTDLSAYRELVDAGPTEFTGFDELTSEATILGIFVDGKRVPVVSHDGLEADRVELILDRTPFYAEAGGQIADEGTISGTGASGTARAAVTDVQKIARTLWAHRVNVESGEFVEGDTVTAAVDPKWRRGATQGHSGTHMVHAALREVLGPNAVQAGSLNRPGYLRFDFNWQGPLSDDQRTQIEEVTNQAVEADYEVHTFVTELEKAKAMGAMAMFGERYPDQVRVVEIGGPFSLELCGGTHVHNSAQIGPVTILGESSVGSGVRRVEAYVGLDSFRHLAKERALMAGLASSLKVPSEEVPARVANLVERLKAAEKELDRMRLANARAAAVNAVAGAETVGKVRLVAQRMSGGMSANDLRSLVGDIRGKLGSEPAVVALIAEGENDAVPFVVAVNPAAQDLGLRANDLVKQFAAPVNGRGGGKADLAQGSGKGAAGIDAALAALRAEIGRS.

4 residues coordinate Zn(2+): H580, H584, C683, and H687.

This sequence belongs to the class-II aminoacyl-tRNA synthetase family. It depends on Zn(2+) as a cofactor.

It is found in the cytoplasm. The enzyme catalyses tRNA(Ala) + L-alanine + ATP = L-alanyl-tRNA(Ala) + AMP + diphosphate. Catalyzes the attachment of alanine to tRNA(Ala) in a two-step reaction: alanine is first activated by ATP to form Ala-AMP and then transferred to the acceptor end of tRNA(Ala). Also edits incorrectly charged Ser-tRNA(Ala) and Gly-tRNA(Ala) via its editing domain. The protein is Alanine--tRNA ligase of Mycolicibacterium smegmatis (strain ATCC 700084 / mc(2)155) (Mycobacterium smegmatis).